The primary structure comprises 158 residues: Probable cyclic pyranopterin monophosphate synthase (158 aa).

Substrate is bound by residues 75–77 (MCH) and 111–112 (ME). Residue Asp126 is part of the active site.

It belongs to the MoaC family. As to quaternary structure, homohexamer; trimer of dimers.

The enzyme catalyses (8S)-3',8-cyclo-7,8-dihydroguanosine 5'-triphosphate = cyclic pyranopterin phosphate + diphosphate. The protein operates within cofactor biosynthesis; molybdopterin biosynthesis. Its function is as follows. Catalyzes the conversion of (8S)-3',8-cyclo-7,8-dihydroguanosine 5'-triphosphate to cyclic pyranopterin monophosphate (cPMP). This is Probable cyclic pyranopterin monophosphate synthase from Methanocorpusculum labreanum (strain ATCC 43576 / DSM 4855 / Z).